A 265-amino-acid chain; its full sequence is Hydroxyethylthiazole kinase (265 aa).

Methionine 50 contributes to the substrate binding site. ATP is bound by residues arginine 125 and threonine 171. Glycine 198 contributes to the substrate binding site.

The protein belongs to the Thz kinase family. It depends on Mg(2+) as a cofactor.

The enzyme catalyses 5-(2-hydroxyethyl)-4-methylthiazole + ATP = 4-methyl-5-(2-phosphooxyethyl)-thiazole + ADP + H(+). The protein operates within cofactor biosynthesis; thiamine diphosphate biosynthesis; 4-methyl-5-(2-phosphoethyl)-thiazole from 5-(2-hydroxyethyl)-4-methylthiazole: step 1/1. Functionally, catalyzes the phosphorylation of the hydroxyl group of 4-methyl-5-beta-hydroxyethylthiazole (THZ). The polypeptide is Hydroxyethylthiazole kinase (Salmonella paratyphi A (strain ATCC 9150 / SARB42)).